Reading from the N-terminus, the 394-residue chain is MSPPLDSSRPVVVIGAGIIGLTTVVCLLESQYYKQYHPPIHIIADYLPNDPLDAKYASTIAGAHHLSFADDGDGRQRNWDLKTFQVMYEQWRQFGEDSGLMALKQTELFVGQMDHLKIYEEHPNFMTLPASMLPPAIDHAVSFTSLTITPSVYLNRLLKQISSLSNGQVKLHRFHLPSLSFLSHPSIKALIGHEPTAGVIVCVGLGALVLGGVNDSLMYPTRGQVVKVRAPWVRSGYTRQIGSLNGGEGGERTYVIPRANGEIILGGTREEGDWYPYPREATTKDILRRAMEICPSLCPANLVAQPLSGTDDRSSTFSSNEQSPSYENPLDSLVIDSLVGFRPSRKGGIRLERGPDLDENTVVIYNYGHGGAGWQSSWGTAEEAVALFCKATRN.

Ile19, Ala57, Ser58, and Gly62 together coordinate FAD. Residues 190-210 (LIGHEPTAGVIVCVGLGALVL) form a helical membrane-spanning segment. An N-linked (GlcNAc...) asparagine glycan is attached at Asn214. FAD-binding residues include Arg342, Gly373, and Gln375.

It belongs to the DAMOX/DASOX family. Requires FAD as cofactor.

Its subcellular location is the membrane. It catalyses the reaction D-aspartate + O2 + H2O = oxaloacetate + H2O2 + NH4(+). Functionally, selectively catalyzes the oxidative deamination of acidic amino acids. Protects the organism from the toxicity of D-amino acids. Enables the organism to utilize D-amino acids as a source of nutrients. Enables the organism to utilize D-aspartate and D-asparagine as a source of nitrogen. May play a role in its interaction with the host. The chain is D-aspartate oxidase from Cryptococcus neoformans var. grubii serotype A (strain H99 / ATCC 208821 / CBS 10515 / FGSC 9487) (Filobasidiella neoformans var. grubii).